The sequence spans 283 residues: Urease accessory protein UreD (283 aa).

The protein belongs to the UreD family. In terms of assembly, ureD, UreF and UreG form a complex that acts as a GTP-hydrolysis-dependent molecular chaperone, activating the urease apoprotein by helping to assemble the nickel containing metallocenter of UreC. The UreE protein probably delivers the nickel.

The protein resides in the cytoplasm. Its function is as follows. Required for maturation of urease via the functional incorporation of the urease nickel metallocenter. The polypeptide is Urease accessory protein UreD (Rhodopseudomonas palustris (strain BisB5)).